Here is a 376-residue protein sequence, read N- to C-terminus: Polar flagellin A (376 aa).

2 coiled-coil regions span residues 103–128 (SNSKAERVAIQEEVTALNDELNRIAE) and 310–338 (FQNRFNHAISNLDNINENVNASNSRIKDT).

This sequence belongs to the bacterial flagellin family. In terms of assembly, heteromer of multiple flagellin subunits including FlaA, FlaB/D, FlaC, FlaE and FlaF.

It is found in the secreted. The protein resides in the bacterial flagellum. In terms of biological role, flagellin is the subunit protein which polymerizes to form the filaments of bacterial flagella. FlaA is not essential for polar flagellar synthesis and swimming motility. Homomer of FlaA is able to form a functional filament. The chain is Polar flagellin A (flaA) from Vibrio parahaemolyticus serotype O3:K6 (strain RIMD 2210633).